The chain runs to 694 residues: Nuclear factor erythroid 2-related factor 3 (694 aa).

Low complexity predominate over residues 133 to 150 (ASSTGGAGASVDGGSQAV). Disordered regions lie at residues 133 to 256 (ASST…LNGT) and 330 to 357 (DPTARTSQSQEPFLQLNSHTTNPEQTLP). 2 stretches are compositionally biased toward basic and acidic residues: residues 193 to 217 (GVLREKHEAVDHSSQHEENEERVSA) and 231 to 254 (NKIAEKPDWEAEKTTESRNERHLN). The span at 333 to 357 (ARTSQSQEPFLQLNSHTTNPEQTLP) shows a compositional bias: polar residues. In terms of domain architecture, bZIP spans 578 to 641 (LIRDIRRRGK…NIMKQKLHDL (64 aa)). A basic motif region spans residues 580–599 (RDIRRRGKNKVAAQNCRKRK). The tract at residues 606-620 (LEDDVCNLQAKKETL) is leucine-zipper.

This sequence belongs to the bZIP family. CNC subfamily. Heterodimer with MAFG, MAFK and other small MAF proteins that binds to the MAF recognition elements (MARE). In terms of tissue distribution, highly expressed in human placenta and also in B-cell and monocyte cell lines. Low expression in heart, brain, lung, skeletal muscle, kidney and pancreas.

It is found in the nucleus. Its function is as follows. Activates erythroid-specific, globin gene expression. This chain is Nuclear factor erythroid 2-related factor 3 (NFE2L3), found in Homo sapiens (Human).